The following is a 599-amino-acid chain: THO complex subunit 1 (599 aa).

2 disordered regions span residues 376–395 (EKQP…RRQR) and 497–599 (KYQA…MPVS). The segment covering 502 to 522 (PNEKAKRAKKEETKGGSHETE) has biased composition (basic and acidic residues). Residues 575–585 (QIEDGETEEAG) are compositionally biased toward acidic residues.

In terms of assembly, component of the THO complex, which is composed of THO1, THO2, THO3, THO5, THO6 and THO7.

It is found in the nucleus. In terms of biological role, acts as a component of the THO subcomplex of the TREX complex which is thought to couple mRNA transcription, processing and nuclear export. Contributes to the integrity of the endogenous trans-acting small interfering RNA (ta-siRNA) pathway. May process or transport a long RNA molecule so that it can be a template for secondary siRNA production. May participate in the trafficking of siRNA precursors to the ARGONAUTE catalytic center. Required for the generation of functional messenger ribonucleoproteins (mRNPs). Plays an important roles in plant innate immunity. This chain is THO complex subunit 1 (THO1), found in Arabidopsis thaliana (Mouse-ear cress).